A 348-amino-acid chain; its full sequence is D-alanine--D-alanine ligase (348 aa).

An ATP-grasp domain is found at 132–334 (KRVLESADIP…YAELIEELVR (203 aa)). 162–217 (EAVLSYPVFVKPANMGSSVGISKAESEEELRAAILLALTYDSRILIEQGVLAREIE) is a binding site for ATP. Residues Asp-288, Glu-301, and Asn-303 each coordinate Mg(2+).

This sequence belongs to the D-alanine--D-alanine ligase family. It depends on Mg(2+) as a cofactor. Requires Mn(2+) as cofactor.

The protein localises to the cytoplasm. The catalysed reaction is 2 D-alanine + ATP = D-alanyl-D-alanine + ADP + phosphate + H(+). It participates in cell wall biogenesis; peptidoglycan biosynthesis. Its function is as follows. Cell wall formation. The sequence is that of D-alanine--D-alanine ligase from Streptococcus equi subsp. zooepidemicus (strain MGCS10565).